Reading from the N-terminus, the 137-residue chain is Large ribosomal subunit protein uL16 (137 aa).

This sequence belongs to the universal ribosomal protein uL16 family. Part of the 50S ribosomal subunit.

Its function is as follows. Binds 23S rRNA and is also seen to make contacts with the A and possibly P site tRNAs. This Ectopseudomonas mendocina (strain ymp) (Pseudomonas mendocina) protein is Large ribosomal subunit protein uL16.